Reading from the N-terminus, the 128-residue chain is MQKRVRNRLITIIICFCSAALGISIVLYNLEKNIVFFLPPSKINEIEQGKELRVGGLVKIDSINKIAADKISFVITDNIRDLEILYQGVLPALFREGQGIIAIGQLSDGKFIARQLLAKHDENYRPPS.

Topologically, residues 1–8 are cytoplasmic; the sequence is MQKRVRNR. A helical; Signal-anchor for type II membrane protein transmembrane segment spans residues 9–29; it reads LITIIICFCSAALGISIVLYN. At 30 to 128 the chain is on the periplasmic side; the sequence is LEKNIVFFLP…KHDENYRPPS (99 aa). Heme-binding residues include histidine 120 and tyrosine 124.

The protein belongs to the CcmE/CycJ family.

It is found in the cell inner membrane. Heme chaperone required for the biogenesis of c-type cytochromes. Transiently binds heme delivered by CcmC and transfers the heme to apo-cytochromes in a process facilitated by CcmF and CcmH. The chain is Cytochrome c-type biogenesis protein CcmE from Rickettsia felis (strain ATCC VR-1525 / URRWXCal2) (Rickettsia azadi).